The chain runs to 1382 residues: Insulin receptor (1382 aa).

A signal peptide spans 1–27 (MATGGRRGAAAAPLLVAVAALLLGAAG). 2 consecutive stretches face the extracellular side: residues 28 to 758 (HLYP…PRPS) and 763 to 956 (SLGD…NIAK). A disulfide bridge links Cys35 with Cys53. N-linked (GlcNAc...) asparagine glycosylation is found at Asn43, Asn52, Asn105, and Asn138. 9 disulfides stabilise this stretch: Cys153-Cys182, Cys186-Cys209, Cys196-Cys215, Cys219-Cys228, Cys223-Cys234, Cys235-Cys243, Cys239-Cys252, Cys255-Cys264, and Cys268-Cys280. Asn242 carries an N-linked (GlcNAc...) asparagine glycan. A glycan (N-linked (GlcNAc...) asparagine) is linked at Asn282. 5 disulfides stabilise this stretch: Cys286/Cys311, Cys293/Cys301, Cys315/Cys328, Cys331/Cys335, and Cys339/Cys360. The N-linked (GlcNAc...) asparagine glycan is linked to Asn322. N-linked (GlcNAc...) asparagine glycosylation occurs at Asn364. Ser400 bears the Phosphoserine mark. Position 401 is a phosphotyrosine (Tyr401). Ser407 is subject to Phosphoserine. Asn424 and Asn445 each carry an N-linked (GlcNAc...) asparagine glycan. A disulfide bridge links Cys462 with Cys495. Asn541, Asn633, Asn651, and Asn698 each carry an N-linked (GlcNAc...) asparagine glycan. In terms of domain architecture, Fibronectin type-III 1 spans 624 to 726 (VPLDPISVSN…SQILKELEES (103 aa)). Cystine bridges form between Cys674/Cys899 and Cys825/Cys834. A disordered region spans residues 686 to 708 (SPPFESEDSQKHNQSEYEDSAGE). The segment at 733–741 (EDYLHNVVF) is insulin-binding. The segment at 746–766 (TSSGTGAEDPRPSRKRRSLGD) is disordered. Fibronectin type-III domains follow at residues 757-842 (PSRK…YVSA) and 853-947 (IVGP…VTDY). N-linked (GlcNAc...) asparagine glycans are attached at residues Asn769 and Asn782. Residues Asn920 and Asn933 are each glycosylated (N-linked (GlcNAc...) asparagine). A helical membrane pass occupies residues 957-979 (IIIGPLIFVFLFSVVIGSIYLFL). Over 980–1382 (RKRQPDGPLG…ILTLPRSNPS (403 aa)) the chain is Cytoplasmic. A phosphotyrosine; by autocatalysis mark is found at Tyr992, Tyr999, and Tyr1011. Position 999 (Tyr999) is a region of interest, important for interaction with IRS1, SHC1 and STAT5B. The region spanning 1023-1298 (ITLLRELGQG…LLKDDLHPSF (276 aa)) is the Protein kinase domain. ATP contacts are provided by Ser1033 and Lys1057. A Glycyl lysine isopeptide (Lys-Gly) (interchain with G-Cter in ubiquitin) cross-link involves residue Lys1079. Position 1083 is an S-nitrosocysteine (Cys1083). ATP is bound at residue 1104 to 1110 (ELMAHGD). Catalysis depends on Asp1159, which acts as the Proton donor/acceptor. ATP is bound by residues 1163-1164 (RN) and Asp1177. Phosphotyrosine; by autocatalysis is present on residues Tyr1185, Tyr1189, Tyr1190, Tyr1355, and Tyr1361. Residues 1360–1382 (PYTHMNGGKKNGRILTLPRSNPS) are disordered. Residues 1361–1364 (YTHM) are PIK3R1-binding.

Belongs to the protein kinase superfamily. Tyr protein kinase family. Insulin receptor subfamily. As to quaternary structure, tetramer of 2 alpha and 2 beta chains linked by disulfide bonds. The alpha chains carry the insulin-binding regions, while the beta chains carry the kinase domain. Forms a hybrid receptor with IGF1R, the hybrid is a tetramer consisting of 1 alpha chain and 1 beta chain of INSR and 1 alpha chain and 1 beta chain of IGF1R. Interacts with SORBS1 but dissociates from it following insulin stimulation. Binds SH2B2. Activated form of INSR interacts (via Tyr-999) with the PTB/PID domains of IRS1 and SHC1. The sequences surrounding the phosphorylated NPXY motif contribute differentially to either IRS1 or SHC1 recognition. Interacts (via tyrosines in the C-terminus) with IRS2 (via PTB domain and 591-786 AA); the 591-786 would be the primary anchor of IRS2 to INSR while the PTB domain would have a stabilizing action on the interaction with INSR. Interacts with the SH2 domains of the 85 kDa regulatory subunit of PI3K (PIK3R1) in vitro, when autophosphorylated on tyrosine residues. Interacts with SOCS7. Interacts (via the phosphorylated Tyr-999), with SOCS3. Interacts (via the phosphorylated Tyr-1185, Tyr-1189, Tyr-1190) with SOCS1. Interacts with CAV2 (tyrosine-phosphorylated form); the interaction is increased with 'Tyr-27'phosphorylation of CAV2. Interacts with ARRB2. Interacts with GRB10; this interaction blocks the association between IRS1/IRS2 and INSR, significantly reduces insulin-stimulated tyrosine phosphorylation of IRS1 and IRS2 and thus decreases insulin signaling. Interacts with GRB7. Interacts with PDPK1. Interacts (via Tyr-1190) with GRB14 (via BPS domain); this interaction protects the tyrosines in the activation loop from dephosphorylation, but promotes dephosphorylation of Tyr-999, this results in decreased interaction with, and phosphorylation of, IRS1. Interacts (via subunit alpha) with ENPP1 (via 485-599 AA); this interaction blocks autophosphorylation. Interacts with PTPRE; this interaction is dependent of Tyr-1185, Tyr-1189 and Tyr-1190 of the INSR. Interacts with STAT5B (via SH2 domain). Interacts with PTPRF. Interacts with ATIC; ATIC together with PRKAA2/AMPK2 and HACD3/PTPLAD1 is proposed to be part of a signaling netwok regulating INSR autophosphorylation and endocytosis. Interacts with the cone snail venom insulin Con-Ins G1. Interacts with the insulin receptor SORL1; this interaction strongly increases its surface exposure, hence strengthens insulin signal reception. Interacts (tyrosine phosphorylated) with CCDC88A/GIV (via SH2-like region); binding requires autophosphorylation of the INSR C-terminal region. Interacts with GNAI3; the interaction is probably mediated by CCDC88A/GIV. Interacts with LMBRD1. Interacts (in response to insulin stimulation) with NCK1; this interaction may recruit PTPN1 to mediate INSR dephosphorylation. Interacts with CD248; this interaction diminishes INSR autophosphorylation. After being transported from the endoplasmic reticulum to the Golgi apparatus, the single glycosylated precursor is further glycosylated and then cleaved, followed by its transport to the plasma membrane. Post-translationally, autophosphorylated on tyrosine residues in response to insulin. Phosphorylation of Tyr-999 is required for binding to IRS1, SHC1 and STAT5B. Dephosphorylated by PTPRE at Tyr-999, Tyr-1185, Tyr-1189 and Tyr-1190. May also be phosphorylated at Tyr-1185 and Tyr-1190 by mTORC2. Dephosphorylated by PTPRF and PTPN1. Dephosphorylated by PTPN2; down-regulates insulin-induced signaling. Dephosphorylation at Tyr-1189 and Tyr-1190 requires the SH2/SH3 adapter protein NCK1, probably to recruit its interaction partner PTPN1. In terms of processing, S-nitrosylation at Cys-1083 by BLVRB inhibits the receptor tyrosine kinase, thereby inhibiting insulin signaling. Ubiquitinated by MARCHF1; leading to degradation thereby reducing surface INSR expression. Isoform Long and isoform Short are predominantly expressed in tissue targets of insulin metabolic effects: liver, adipose tissue and skeletal muscle but are also expressed in the peripheral nerve, kidney, pulmonary alveoli, pancreatic acini, placenta vascular endothelium, fibroblasts, monocytes, granulocytes, erythrocytes and skin. Isoform Short is preferentially expressed in fetal cells such as fetal fibroblasts, muscle, liver and kidney. Found as a hybrid receptor with IGF1R in muscle, heart, kidney, adipose tissue, skeletal muscle, hepatoma, fibroblasts, spleen and placenta (at protein level). Overexpressed in several tumors, including breast, colon, lung, ovary, and thyroid carcinomas.

It is found in the cell membrane. The protein localises to the late endosome. It localises to the lysosome. It carries out the reaction L-tyrosyl-[protein] + ATP = O-phospho-L-tyrosyl-[protein] + ADP + H(+). Its activity is regulated as follows. Activated in response to insulin. Autophosphorylation activates the kinase activity. PTPN1, PTPRE and PTPRF dephosphorylate important tyrosine residues, thereby reducing INSR activity. Inhibited by ENPP1. GRB10 and GRB14 inhibit the catalytic activity of the INSR, they block access of substrates to the activated receptor. SOCS1 and SOCS3 act as negative regulators of INSR activity, they bind to the activated INRS and interfere with the phosphorylation of INSR substrates. Its function is as follows. Receptor tyrosine kinase which mediates the pleiotropic actions of insulin. Binding of insulin leads to phosphorylation of several intracellular substrates, including, insulin receptor substrates (IRS1, 2, 3, 4), SHC, GAB1, CBL and other signaling intermediates. Each of these phosphorylated proteins serve as docking proteins for other signaling proteins that contain Src-homology-2 domains (SH2 domain) that specifically recognize different phosphotyrosine residues, including the p85 regulatory subunit of PI3K and SHP2. Phosphorylation of IRSs proteins lead to the activation of two main signaling pathways: the PI3K-AKT/PKB pathway, which is responsible for most of the metabolic actions of insulin, and the Ras-MAPK pathway, which regulates expression of some genes and cooperates with the PI3K pathway to control cell growth and differentiation. Binding of the SH2 domains of PI3K to phosphotyrosines on IRS1 leads to the activation of PI3K and the generation of phosphatidylinositol-(3, 4, 5)-triphosphate (PIP3), a lipid second messenger, which activates several PIP3-dependent serine/threonine kinases, such as PDPK1 and subsequently AKT/PKB. The net effect of this pathway is to produce a translocation of the glucose transporter SLC2A4/GLUT4 from cytoplasmic vesicles to the cell membrane to facilitate glucose transport. Moreover, upon insulin stimulation, activated AKT/PKB is responsible for: anti-apoptotic effect of insulin by inducing phosphorylation of BAD; regulates the expression of gluconeogenic and lipogenic enzymes by controlling the activity of the winged helix or forkhead (FOX) class of transcription factors. Another pathway regulated by PI3K-AKT/PKB activation is mTORC1 signaling pathway which regulates cell growth and metabolism and integrates signals from insulin. AKT mediates insulin-stimulated protein synthesis by phosphorylating TSC2 thereby activating mTORC1 pathway. The Ras/RAF/MAP2K/MAPK pathway is mainly involved in mediating cell growth, survival and cellular differentiation of insulin. Phosphorylated IRS1 recruits GRB2/SOS complex, which triggers the activation of the Ras/RAF/MAP2K/MAPK pathway. In addition to binding insulin, the insulin receptor can bind insulin-like growth factors (IGFI and IGFII). Isoform Short has a higher affinity for IGFII binding. When present in a hybrid receptor with IGF1R, binds IGF1. PubMed:12138094 shows that hybrid receptors composed of IGF1R and INSR isoform Long are activated with a high affinity by IGF1, with low affinity by IGF2 and not significantly activated by insulin, and that hybrid receptors composed of IGF1R and INSR isoform Short are activated by IGF1, IGF2 and insulin. In contrast, PubMed:16831875 shows that hybrid receptors composed of IGF1R and INSR isoform Long and hybrid receptors composed of IGF1R and INSR isoform Short have similar binding characteristics, both bind IGF1 and have a low affinity for insulin. In adipocytes, inhibits lipolysis. The sequence is that of Insulin receptor (INSR) from Homo sapiens (Human).